The sequence spans 303 residues: GTPase Era (303 aa).

Positions 9–176 constitute an Era-type G domain; the sequence is KSGFVSIIGR…VEQIVEHMEE (168 aa). Positions 17 to 24 are G1; sequence GRPNVGKS. 17–24 serves as a coordination point for GTP; sequence GRPNVGKS. Residues 43-47 form a G2 region; that stretch reads QTTRN. Residues 64–67 are G3; sequence DTPG. GTP is bound by residues 64–68 and 126–129; these read DTPGI and NKID. Positions 126-129 are G4; the sequence is NKID. The interval 155–157 is G5; that stretch reads ISA. The KH type-2 domain maps to 199–284; the sequence is IREKVLHLTK…YLELWVKVQK (86 aa).

This sequence belongs to the TRAFAC class TrmE-Era-EngA-EngB-Septin-like GTPase superfamily. Era GTPase family. Monomer.

Its subcellular location is the cytoplasm. It is found in the cell membrane. An essential GTPase that binds both GDP and GTP, with rapid nucleotide exchange. Plays a role in 16S rRNA processing and 30S ribosomal subunit biogenesis and possibly also in cell cycle regulation and energy metabolism. This Shouchella clausii (strain KSM-K16) (Alkalihalobacillus clausii) protein is GTPase Era.